The sequence spans 121 residues: Putative iron-sulfur cluster insertion protein ErpA (121 aa).

Positions 49, 113, and 115 each coordinate iron-sulfur cluster.

It belongs to the HesB/IscA family. Homodimer. Iron-sulfur cluster serves as cofactor.

Functionally, required for insertion of 4Fe-4S clusters. This Paraburkholderia phymatum (strain DSM 17167 / CIP 108236 / LMG 21445 / STM815) (Burkholderia phymatum) protein is Putative iron-sulfur cluster insertion protein ErpA.